Reading from the N-terminus, the 311-residue chain is Methionyl-tRNA formyltransferase (311 aa).

110–113 (SLLP) is a (6S)-5,6,7,8-tetrahydrofolate binding site.

It belongs to the Fmt family.

The enzyme catalyses L-methionyl-tRNA(fMet) + (6R)-10-formyltetrahydrofolate = N-formyl-L-methionyl-tRNA(fMet) + (6S)-5,6,7,8-tetrahydrofolate + H(+). In terms of biological role, attaches a formyl group to the free amino group of methionyl-tRNA(fMet). The formyl group appears to play a dual role in the initiator identity of N-formylmethionyl-tRNA by promoting its recognition by IF2 and preventing the misappropriation of this tRNA by the elongation apparatus. This is Methionyl-tRNA formyltransferase from Streptococcus pyogenes serotype M6 (strain ATCC BAA-946 / MGAS10394).